The chain runs to 467 residues: Cytochrome c-552 (467 aa).

The signal sequence occupies residues 1 to 27; it reads MMKKMTGKSFALSALVAASFMAAGAMA. Histidine 87 provides a ligand contact to heme c. Heme is bound by residues cysteine 115, cysteine 118, and lysine 119. Residues cysteine 153, cysteine 156, histidine 157, cysteine 195, cysteine 198, and histidine 199 each coordinate heme c. Glutamate 201, tyrosine 202, lysine 250, and glutamine 252 together coordinate Ca(2+). Tyrosine 202 lines the substrate pocket. Histidine 253 serves as a coordination point for substrate. Heme c contacts are provided by histidine 264, cysteine 271, cysteine 274, histidine 275, histidine 290, cysteine 303, cysteine 306, histidine 307, and histidine 382.

The protein belongs to the cytochrome c-552 family. Ca(2+) serves as cofactor. It depends on heme c as a cofactor.

It is found in the periplasm. The catalysed reaction is 6 Fe(III)-[cytochrome c] + NH4(+) + 2 H2O = 6 Fe(II)-[cytochrome c] + nitrite + 8 H(+). The protein operates within nitrogen metabolism; nitrate reduction (assimilation). In terms of biological role, catalyzes the reduction of nitrite to ammonia, consuming six electrons in the process. This Shewanella sp. (strain MR-4) protein is Cytochrome c-552.